A 257-amino-acid polypeptide reads, in one-letter code: Tryptophan synthase alpha chain (257 aa).

Catalysis depends on proton acceptor residues E51 and D62.

The protein belongs to the TrpA family. As to quaternary structure, tetramer of two alpha and two beta chains.

It carries out the reaction (1S,2R)-1-C-(indol-3-yl)glycerol 3-phosphate + L-serine = D-glyceraldehyde 3-phosphate + L-tryptophan + H2O. Its pathway is amino-acid biosynthesis; L-tryptophan biosynthesis; L-tryptophan from chorismate: step 5/5. Its function is as follows. The alpha subunit is responsible for the aldol cleavage of indoleglycerol phosphate to indole and glyceraldehyde 3-phosphate. The protein is Tryptophan synthase alpha chain of Nitratidesulfovibrio vulgaris (strain ATCC 29579 / DSM 644 / CCUG 34227 / NCIMB 8303 / VKM B-1760 / Hildenborough) (Desulfovibrio vulgaris).